The following is a 290-amino-acid chain: MKKKTLLPLFLGIMVFLAGCDYSKPEKRSGFFYNTFVDPMKNVLDWLGNNLLNDNYGLAIIILVLVIRIILLPFMLSNYKNSHMMRQKMKVAKPEVEKIQEKVKRARTQEEKMAANQELMQVYKKYDMNPIKSMLGCLPMLIQLPIIMGLYFVLKDQLVDGLFKYPHFLWFDLGRPDIWITIIAGVLYFIQAYVSSKTMPDEQRQMGYMMMVISPIMIIWISLSSASALGLYWSVSAAFLVVQTHFANIYYEKVAKKEVQPFIEAYEREHNGGSNKKGKNTQVVSKKKKK.

Residues 1-19 (MKKKTLLPLFLGIMVFLAG) form the signal peptide. C20 carries N-palmitoyl cysteine lipidation. C20 carries the S-diacylglycerol cysteine lipid modification. 5 helical membrane passes run 56–76 (YGLA…PFML), 134–154 (MLGC…YFVL), 176–196 (PDIW…YVSS), 207–224 (GYMM…ISLS), and 229–251 (LGLY…NIYY). The disordered stretch occupies residues 270–290 (HNGGSNKKGKNTQVVSKKKKK).

It belongs to the OXA1/ALB3/YidC family. Type 2 subfamily.

The protein localises to the cell membrane. In terms of biological role, required for the insertion and/or proper folding and/or complex formation of integral membrane proteins into the membrane. Involved in integration of membrane proteins that insert both dependently and independently of the Sec translocase complex, as well as at least some lipoproteins. In Staphylococcus aureus (strain MRSA252), this protein is Membrane protein insertase YidC.